The primary structure comprises 313 residues: Olfactory receptor 8B3 (313 aa).

The Extracellular portion of the chain corresponds to 1-25 (MLARNNSLVTEFILAGLTDHPEFQQ). N-linked (GlcNAc...) asparagine glycosylation is present at Asn5. Residues 26-46 (PLFFLFLVVYIVTMVGNLGLI) form a helical membrane-spanning segment. At 47–54 (ILFGLNSH) the chain is on the cytoplasmic side. Residues 55–75 (LHTPMYYFLFNLSFIDLCYSS) form a helical membrane-spanning segment. The Extracellular portion of the chain corresponds to 76 to 99 (VFTPKMLMNFVSKKNIISYVGCMT). An intrachain disulfide couples Cys97 to Cys189. Residues 100–120 (QLFFFLFFVISECYMLTSMAY) traverse the membrane as a helical segment. The Cytoplasmic portion of the chain corresponds to 121 to 139 (DRYVAICNPLLYKVTMSHQ). A helical transmembrane segment spans residues 140–160 (VCSMLTFAAYIMGLAGATAHT). Topologically, residues 161–197 (GCMLRLTFCSANIINHYLCDILPLLQLSCTSTYVNEV) are extracellular. Residues 198–217 (VVLIVVGINIMVPSCTILIS) form a helical membrane-spanning segment. Topologically, residues 218-237 (YVFIVTSILHIKSTQGRSKA) are cytoplasmic. The helical transmembrane segment at 238–258 (FSTCSSHVIALSLFFGSAAFM) threads the bilayer. Residues 259–270 (YIKYSSGSMEQG) lie on the Extracellular side of the membrane. The chain crosses the membrane as a helical span at residues 271–291 (KVSSVFYTNVVPMLNPLIYSL). At 292–313 (RNKDVKVALRKALIKIQRRNIF) the chain is on the cytoplasmic side.

The protein belongs to the G-protein coupled receptor 1 family.

It localises to the cell membrane. Odorant receptor. This Homo sapiens (Human) protein is Olfactory receptor 8B3 (OR8B3).